The chain runs to 116 residues: Ribonuclease P protein component (116 aa).

It belongs to the RnpA family. In terms of assembly, consists of a catalytic RNA component (M1 or rnpB) and a protein subunit.

The catalysed reaction is Endonucleolytic cleavage of RNA, removing 5'-extranucleotides from tRNA precursor.. Its function is as follows. RNaseP catalyzes the removal of the 5'-leader sequence from pre-tRNA to produce the mature 5'-terminus. It can also cleave other RNA substrates such as 4.5S RNA. The protein component plays an auxiliary but essential role in vivo by binding to the 5'-leader sequence and broadening the substrate specificity of the ribozyme. The polypeptide is Ribonuclease P protein component (Geobacter sp. (strain M21)).